The primary structure comprises 597 residues: Electron transfer flavoprotein-ubiquinone oxidoreductase, mitochondrial (597 aa).

An FAD-binding site is contributed by 53–67 (VVIVGGGPSGLSAAI). An intramembrane segment occupies 91–112 (IGGHTLSGAVIETRALDELIPN). G285 and G286 together coordinate a ubiquinone. Residues 409–426 (IDPATYDKNIRDTYVVKE) lie within the membrane without spanning it. [4Fe-4S] cluster-binding residues include C540, C566, C569, and C572. Residues 557-586 (KRLQINAQNCIHCKTCDIKDPQQNINWVTP) form the 4Fe-4S ferredoxin-type domain.

It belongs to the ETF-QO/FixC family. As to quaternary structure, monomer. [4Fe-4S] cluster serves as cofactor. It depends on FAD as a cofactor.

Its subcellular location is the mitochondrion inner membrane. It catalyses the reaction a ubiquinone + reduced [electron-transfer flavoprotein] = a ubiquinol + oxidized [electron-transfer flavoprotein] + H(+). Accepts electrons from ETF and reduces ubiquinone. This Caenorhabditis elegans protein is Electron transfer flavoprotein-ubiquinone oxidoreductase, mitochondrial (let-721).